We begin with the raw amino-acid sequence, 487 residues long: N-succinylglutamate 5-semialdehyde dehydrogenase (487 aa).

Residue 221–226 (GSSDTG) coordinates NAD(+). Residues Glu-244 and Cys-278 contribute to the active site.

Belongs to the aldehyde dehydrogenase family. AstD subfamily.

It catalyses the reaction N-succinyl-L-glutamate 5-semialdehyde + NAD(+) + H2O = N-succinyl-L-glutamate + NADH + 2 H(+). It participates in amino-acid degradation; L-arginine degradation via AST pathway; L-glutamate and succinate from L-arginine: step 4/5. In terms of biological role, catalyzes the NAD-dependent reduction of succinylglutamate semialdehyde into succinylglutamate. This chain is N-succinylglutamate 5-semialdehyde dehydrogenase, found in Burkholderia lata (strain ATCC 17760 / DSM 23089 / LMG 22485 / NCIMB 9086 / R18194 / 383).